We begin with the raw amino-acid sequence, 293 residues long: Acetyl-coenzyme A carboxylase carboxyl transferase subunit beta (293 aa).

One can recognise a CoA carboxyltransferase N-terminal domain in the interval 29 to 293 (LWSKCPECGL…GSKSLELTNA (265 aa)). Cys-33, Cys-36, Cys-52, and Cys-55 together coordinate Zn(2+). Residues 33-55 (CPECGLVVYLKDLRLNASVCAGC) form a C4-type zinc finger.

This sequence belongs to the AccD/PCCB family. Acetyl-CoA carboxylase is a heterohexamer composed of biotin carboxyl carrier protein (AccB), biotin carboxylase (AccC) and two subunits each of ACCase subunit alpha (AccA) and ACCase subunit beta (AccD). Zn(2+) is required as a cofactor.

Its subcellular location is the cytoplasm. The enzyme catalyses N(6)-carboxybiotinyl-L-lysyl-[protein] + acetyl-CoA = N(6)-biotinyl-L-lysyl-[protein] + malonyl-CoA. The protein operates within lipid metabolism; malonyl-CoA biosynthesis; malonyl-CoA from acetyl-CoA: step 1/1. Its function is as follows. Component of the acetyl coenzyme A carboxylase (ACC) complex. Biotin carboxylase (BC) catalyzes the carboxylation of biotin on its carrier protein (BCCP) and then the CO(2) group is transferred by the transcarboxylase to acetyl-CoA to form malonyl-CoA. The polypeptide is Acetyl-coenzyme A carboxylase carboxyl transferase subunit beta (Synechococcus sp. (strain CC9902)).